Consider the following 548-residue polypeptide: MGKPKKKSDLSRAELMMMTIADVIKQLVEAHEEGKDINLNKVKTKTSAKYGLSAQPRLVDIIAAVPPHYRRALVPKLKAKPIRTASGIAVVAVMCKPHRCPHISFTGNICVYCPGGPDSDFEYSTQSYTGYEPTSMRAIRARYDPYLQTRHRVEQLKQLGHSVDKVEFIVMGGTFMALPEEYRDYFIRNLHDALSGHTSNNVTEAVRYSERSNTKCVGITIETRPDYCLKRHLSDMLGYGCTRLEIGVQSVYEDVARDTNRGHTVRAVCESFHLAKDAGFKVVAHMMPDLPNVGMERDVEQFIEFFENPAFRPDGLKLYPTLVIRGTGLYELWKTGRYKSYSPSALVDLVARILALVPPWTRVYRVQRDIPMPLVSSGVEHGNLRELALARMKDMGTECRDVRTREVGIQEIHHKVRPYQVELIRRDYVANGGWETFLSYEDPEQDILIGLLRLRRCSPQSFRPELKGGVSIVRELHVYGSVVPVSSRDPSKFQHQGFGMMLMEEAERIARDEHGSSKLAVISGVGTRNYYRKMGYELEGPYMVKNLY.

In terms of domain architecture, Radical SAM core spans 83–373; the sequence is RTASGIAVVA…YRVQRDIPMP (291 aa). C100, C110, and C113 together coordinate [4Fe-4S] cluster. Acetyl-CoA contacts are provided by residues K165, 475-478, 498-500, and Y531; these read ELHV and FGM. Positions 397–548 constitute an N-acetyltransferase domain; that stretch reads TECRDVRTRE…EGPYMVKNLY (152 aa).

The protein belongs to the ELP3 family. As to quaternary structure, component of the elongator complex. It depends on [4Fe-4S] cluster as a cofactor.

It is found in the cytoplasm. The protein localises to the nucleus. The enzyme catalyses uridine(34) in tRNA + acetyl-CoA + S-adenosyl-L-methionine + H2O = 5-(carboxymethyl)uridine(34) in tRNA + 5'-deoxyadenosine + L-methionine + CoA + 2 H(+). The protein operates within tRNA modification; 5-methoxycarbonylmethyl-2-thiouridine-tRNA biosynthesis. Catalytic tRNA acetyltransferase subunit of the elongator complex which is required for multiple tRNA modifications, including mcm5U (5-methoxycarbonylmethyl uridine), mcm5s2U (5-methoxycarbonylmethyl-2-thiouridine), and ncm5U (5-carbamoylmethyl uridine). In the elongator complex, acts as a tRNA uridine(34) acetyltransferase by mediating formation of carboxymethyluridine in the wobble base at position 34 in tRNAs. Involved in neurogenesis. Involved in somite development. This Danio rerio (Zebrafish) protein is Elongator complex protein 3.